Consider the following 133-residue polypeptide: Alpha-amylase inhibitor/endochitinase (133 aa).

Catalysis depends on E30, which acts as the Proton donor.

It belongs to the glycosyl hydrolase 19 family. Chitinase class I subfamily.

The enzyme catalyses Random endo-hydrolysis of N-acetyl-beta-D-glucosaminide (1-&gt;4)-beta-linkages in chitin and chitodextrins.. Functionally, this protein functions both as an alpha-amylase inhibitor and as a chitinase. The polypeptide is Alpha-amylase inhibitor/endochitinase (Coix lacryma-jobi (Job's tears)).